The primary structure comprises 211 residues: MRNIQIALTKGRLEKHVIPLFEKIGIGCSELKDKGRKLVFKSKNTNISFILVKAVDVATYVEHGVADIGVVGKDILMEFEKDIYEMVDLGVGVCKFCVASIPTYNPKSYRKKRIATKYPHITSTYFHDKGEDVEIIKIEGSVEIAPLLGLADAIVDIVETGKTLQENGLIVFEEMCSISARMIVNKAALKTKKDEIFRIINMMEQEILSGK.

The protein belongs to the ATP phosphoribosyltransferase family. Short subfamily. In terms of assembly, heteromultimer composed of HisG and HisZ subunits.

It localises to the cytoplasm. The enzyme catalyses 1-(5-phospho-beta-D-ribosyl)-ATP + diphosphate = 5-phospho-alpha-D-ribose 1-diphosphate + ATP. Its pathway is amino-acid biosynthesis; L-histidine biosynthesis; L-histidine from 5-phospho-alpha-D-ribose 1-diphosphate: step 1/9. Catalyzes the condensation of ATP and 5-phosphoribose 1-diphosphate to form N'-(5'-phosphoribosyl)-ATP (PR-ATP). Has a crucial role in the pathway because the rate of histidine biosynthesis seems to be controlled primarily by regulation of HisG enzymatic activity. This chain is ATP phosphoribosyltransferase, found in Bacillus mycoides (strain KBAB4) (Bacillus weihenstephanensis).